The chain runs to 327 residues: Glutaminase 1 (327 aa).

The substrate site is built by Ser74, Asn126, Glu170, Asn177, Tyr201, Tyr253, and Val271.

Belongs to the glutaminase family. As to quaternary structure, homotetramer.

It catalyses the reaction L-glutamine + H2O = L-glutamate + NH4(+). This Bacillus subtilis (strain 168) protein is Glutaminase 1 (glsA1).